The chain runs to 454 residues: Ribosomal protein uS12 methylthiotransferase RimO (454 aa).

The MTTase N-terminal domain occupies 14 to 125 (SKIAFSHVGC…IAKVLDRVEK (112 aa)). [4Fe-4S] cluster-binding residues include Cys23, Cys59, Cys88, Cys163, Cys167, and Cys170. One can recognise a Radical SAM core domain in the interval 149–378 (DKNKFVAYLR…ISVQQNISRE (230 aa)). One can recognise a TRAM domain in the interval 381–452 (QIYVGSKMKI…EYDLYGETIK (72 aa)).

Belongs to the methylthiotransferase family. RimO subfamily. The cofactor is [4Fe-4S] cluster.

The protein resides in the cytoplasm. The catalysed reaction is L-aspartate(89)-[ribosomal protein uS12]-hydrogen + (sulfur carrier)-SH + AH2 + 2 S-adenosyl-L-methionine = 3-methylsulfanyl-L-aspartate(89)-[ribosomal protein uS12]-hydrogen + (sulfur carrier)-H + 5'-deoxyadenosine + L-methionine + A + S-adenosyl-L-homocysteine + 2 H(+). Functionally, catalyzes the methylthiolation of an aspartic acid residue of ribosomal protein uS12. This is Ribosomal protein uS12 methylthiotransferase RimO from Prochlorococcus marinus (strain MIT 9301).